The primary structure comprises 372 residues: Queuine tRNA-ribosyltransferase (372 aa).

Asp89 serves as the catalytic Proton acceptor. Substrate-binding positions include 89-93 (DSGGF), Asp161, and Gly232. Positions 262-268 (GIGDLPS) are RNA binding. The Nucleophile role is filled by Asp281. The RNA binding; important for wobble base 34 recognition stretch occupies residues 286 to 290 (TKAAR). Residues Cys319, Cys321, Cys324, and His351 each contribute to the Zn(2+) site.

It belongs to the queuine tRNA-ribosyltransferase family. Homodimer. Within each dimer, one monomer is responsible for RNA recognition and catalysis, while the other monomer binds to the replacement base PreQ1. Zn(2+) is required as a cofactor.

It catalyses the reaction 7-aminomethyl-7-carbaguanine + guanosine(34) in tRNA = 7-aminomethyl-7-carbaguanosine(34) in tRNA + guanine. Its pathway is tRNA modification; tRNA-queuosine biosynthesis. Catalyzes the base-exchange of a guanine (G) residue with the queuine precursor 7-aminomethyl-7-deazaguanine (PreQ1) at position 34 (anticodon wobble position) in tRNAs with GU(N) anticodons (tRNA-Asp, -Asn, -His and -Tyr). Catalysis occurs through a double-displacement mechanism. The nucleophile active site attacks the C1' of nucleotide 34 to detach the guanine base from the RNA, forming a covalent enzyme-RNA intermediate. The proton acceptor active site deprotonates the incoming PreQ1, allowing a nucleophilic attack on the C1' of the ribose to form the product. After dissociation, two additional enzymatic reactions on the tRNA convert PreQ1 to queuine (Q), resulting in the hypermodified nucleoside queuosine (7-(((4,5-cis-dihydroxy-2-cyclopenten-1-yl)amino)methyl)-7-deazaguanosine). The polypeptide is Queuine tRNA-ribosyltransferase (Chlamydia trachomatis serovar A (strain ATCC VR-571B / DSM 19440 / HAR-13)).